The chain runs to 765 residues: LPS-assembly protein LptD (765 aa).

The N-terminal stretch at 1–18 is a signal peptide; it reads MQIRYFLALSLLPQLVLA.

Belongs to the LptD family. Component of the lipopolysaccharide transport and assembly complex. Interacts with LptE and LptA.

Its subcellular location is the cell outer membrane. Its function is as follows. Together with LptE, is involved in the assembly of lipopolysaccharide (LPS) at the surface of the outer membrane. The protein is LPS-assembly protein LptD of Shewanella sp. (strain MR-4).